Reading from the N-terminus, the 361-residue chain is Thermostable alkaline protease (361 aa).

Residues 1 to 24 (MRQSLKVMVLSTVALLFMANPAAA) form the signal peptide. A propeptide spanning residues 25–93 (SEEKKEYLIV…IEKNAEVTIS (69 aa)) is cleaved from the precursor. Gln-94 lines the Ca(2+) pocket. The 264-residue stretch at 97-360 (PWGISFINTQ…NGLVHAGRAT (264 aa)) folds into the Peptidase S8 domain. Residue Asp-124 is the Charge relay system of the active site. Residue Asp-132 participates in Ca(2+) binding. The active-site Charge relay system is the His-154. 7 residues coordinate Ca(2+): Leu-165, Asn-167, Ile-169, Val-171, Ala-255, Tyr-257, and Val-260. The Charge relay system role is filled by Ser-307.

The protein belongs to the peptidase S8 family. Requires Ca(2+) as cofactor.

The protein localises to the secreted. Its function is as follows. Shows keratinolytic activity. This Halalkalibacterium halodurans (strain ATCC BAA-125 / DSM 18197 / FERM 7344 / JCM 9153 / C-125) (Bacillus halodurans) protein is Thermostable alkaline protease.